Consider the following 326-residue polypeptide: Transcription factor WRKY45-1 (326 aa).

Disordered stretches follow at residues 67–114 (GGEG…SVVV) and 252–288 (GVGS…FGPD). Positions 112 to 180 (VVVKNLDDGQ…YIGEHTCRDP (69 aa)) form a DNA-binding region, WRKY. The segment covering 273-283 (RGGGGGGGVAG) has biased composition (gly residues).

It belongs to the WRKY group III family. Expressed in aleurone cells.

The protein resides in the nucleus. Functionally, transcriptional activator involved in defense responses against pathogens. Acts as a positive regulator of defense responses against the rice blast fungus Magnaporthe oryzae. Acts through W-boxes, which are cis-elements that are enriched in the promoters of several defense-related genes. Plays an important role in the benzothiadiazole-induced disease resistance by mediating salicylic acid (SA) defense signaling pathway, independently of the disease resistance gene NPR1/NH1. Acts as a negative regulator of defense responses against the bacterial blight Xanthomonas oryzae pv oryzae (Xoo) and the bacterial streak Xanthomonas oryzae pv oryzicola (Xoc). Acts downstream of abscisic acid (ABA) signaling in response to the rice blast fungus. ABA is a negative regulator of defense responses that interacts antagonistically with salicylic acid (SA) signaling pathway. Acts as a negative regulator of ABA signaling that suppresses growth of seedlings. Does not seem to be involved in the regulation of salt stress response. Acts as a negative regulator of cold stress response. Acts as a negative regulator of drought stress response. This is Transcription factor WRKY45-1 from Oryza sativa subsp. japonica (Rice).